The following is a 1555-amino-acid chain: Protein TASOR (1555 aa).

Disordered stretches follow at residues 1–74 (MEEN…DKRA), 645–711 (QKKK…RQET), 744–773 (QNST…GQDQ), 870–911 (ALPN…TTPS), and 1390–1462 (NQGD…PTLD). The span at 35-47 (VQQTLKRTNSTES) shows a compositional bias: polar residues. Residues 61–71 (RRFQIPRKSRD) show a composition bias toward basic residues. The segment covering 667 to 688 (DRQSEKAWKHRKCEENVHHDNE) has biased composition (basic and acidic residues). 2 stretches are compositionally biased toward polar residues: residues 692 to 702 (SAQSLISSLGG) and 744 to 761 (QNST…LSQA). The span at 888-904 (PLHETERQRPRHDRDYC) shows a compositional bias: basic and acidic residues. A compositionally biased stretch (acidic residues) spans 1402-1417 (SKEEEDMSLDSEDDTP). Residues 1448–1458 (ESPSTLNQGKT) are compositionally biased toward polar residues.

It belongs to the TASOR family. In terms of assembly, component of the HUSH complex.

The protein localises to the nucleus. It is found in the chromosome. Component of the HUSH complex, a multiprotein complex that mediates epigenetic repression. The HUSH complex is recruited to genomic loci rich in H3K9me3 and is probably required to maintain transcriptional silencing by promoting further deposition of H3K9me3. In Xenopus laevis (African clawed frog), this protein is Protein TASOR.